Here is a 500-residue protein sequence, read N- to C-terminus: Intracellular exo-alpha-(1-&gt;5)-L-arabinofuranosidase 1 (500 aa).

Residues E27, N72, and N172 each coordinate alpha-L-arabinofuranose. The Proton donor/acceptor role is filled by E173. Alpha-L-arabinofuranose-binding residues include Y244, E292, and Q349. The Nucleophile role is filled by E292.

The protein belongs to the glycosyl hydrolase 51 family. As to quaternary structure, homohexamer; trimer of dimers.

Its subcellular location is the cytoplasm. It catalyses the reaction Hydrolysis of terminal non-reducing alpha-L-arabinofuranoside residues in alpha-L-arabinosides.. The enzyme catalyses (20S)-ginsenoside Rc + H2O = L-arabinofuranose + (20S)-ginsenoside Rd. It participates in glycan metabolism; L-arabinan degradation. With respect to regulation, at a concentration of 5 mM, K(+), Cu(2+) and Ni(2+) exhibit inhibitory effects on the activity. Additionally, the chemical reagent SDS also displays a certain degree of inhibition. Enzymatic activity is largely unaffected by product feedback inhibition. In terms of biological role, involved in the degradation of arabinan and is a key enzyme in the complete degradation of the plant cell wall. Catalyzes the cleavage of terminal alpha-(1-&gt;5)-arabinofuranosyl bonds in different hemicellulosic homopolysaccharides (branched and debranched arabinans). It acts preferentially on arabinotriose, arabinobiose and linear alpha-(1-&gt;5)-L-arabinan, and is much less effective on branched sugar beet arabinan. When expressed in E.coli, the recombinant enyzme can hydrolyze, with relatively low catalytic efficiency, the terminal alpha-L-arabinofuranoside at the C20 position of ginsenoside Rc to produce ginsenoside Rd, a rare ginsenoside that exhibits diverse and powerful pharmacological activities. The chain is Intracellular exo-alpha-(1-&gt;5)-L-arabinofuranosidase 1 from Bacillus subtilis (strain 168).